The following is a 136-amino-acid chain: uncharacterized protein (136 aa).

This is an uncharacterized protein from Pasteurella multocida (strain Pm70).